The sequence spans 293 residues: Phospholipid scramblase 2 (293 aa).

Residues 1–39 (MDKQNVQMNPPHPGTNLTGPPGHIGYPGPQAGYAVPPPG) form a disordered region. Residues 1–66 (MDKQNVQMNP…GHPGAPTQVP (66 aa)) are proline-rich domain (PRD). Residues 1–270 (MDKQNVQMNP…IQFPLDLDVK (270 aa)) are Cytoplasmic-facing. Position 143 is a phosphothreonine; by PKC (threonine 143). Residues cysteine 166, cysteine 167, cysteine 170, and cysteine 171 are each lipidated (S-palmitoyl cysteine). The chain crosses the membrane as a helical span at residues 271-287 (MKAVMLGACFLIDFMFF). The Extracellular portion of the chain corresponds to 288 to 293 (EMTRGE).

Belongs to the phospholipid scramblase family. Ca(2+) is required as a cofactor.

It localises to the membrane. The catalysed reaction is a 1,2-diacyl-sn-glycero-3-phosphocholine(in) = a 1,2-diacyl-sn-glycero-3-phosphocholine(out). Functionally, may catalyze calcium-induced ATP-independent rapid bidirectional and non-specific movement of phospholipids (lipid scrambling or lipid flip-flop) between the inner and outer leaflet of the plasma membrane. This is Phospholipid scramblase 2 from Bos taurus (Bovine).